The primary structure comprises 175 residues: Peptide deformylase (175 aa).

Cys96 and His138 together coordinate Fe cation. Glu139 is an active-site residue. His142 serves as a coordination point for Fe cation.

Belongs to the polypeptide deformylase family. Fe(2+) is required as a cofactor.

It carries out the reaction N-terminal N-formyl-L-methionyl-[peptide] + H2O = N-terminal L-methionyl-[peptide] + formate. In terms of biological role, removes the formyl group from the N-terminal Met of newly synthesized proteins. Requires at least a dipeptide for an efficient rate of reaction. N-terminal L-methionine is a prerequisite for activity but the enzyme has broad specificity at other positions. This Rhodopseudomonas palustris (strain ATCC BAA-98 / CGA009) protein is Peptide deformylase.